Consider the following 277-residue polypeptide: Shikimate dehydrogenase (NADP(+)) (277 aa).

Shikimate-binding positions include 15-17 (SLS) and Thr-62. The Proton acceptor role is filled by Lys-66. 2 residues coordinate shikimate: Asn-87 and Asp-102. NADP(+) is bound by residues 127–131 (GAGGA), 151–156 (NRTVSK), and Ile-219. Tyr-221 contributes to the shikimate binding site. Residue Gly-242 participates in NADP(+) binding.

Belongs to the shikimate dehydrogenase family. Homodimer.

The enzyme catalyses shikimate + NADP(+) = 3-dehydroshikimate + NADPH + H(+). The protein operates within metabolic intermediate biosynthesis; chorismate biosynthesis; chorismate from D-erythrose 4-phosphate and phosphoenolpyruvate: step 4/7. In terms of biological role, involved in the biosynthesis of the chorismate, which leads to the biosynthesis of aromatic amino acids. Catalyzes the reversible NADPH linked reduction of 3-dehydroshikimate (DHSA) to yield shikimate (SA). The protein is Shikimate dehydrogenase (NADP(+)) of Geobacillus sp. (strain WCH70).